The following is a 152-amino-acid chain: Clitocypin-5 (152 aa).

In terms of assembly, homodimer.

In terms of biological role, binds and inhibits cysteine proteinases. Inhibits most strongly papain and cathepsin L, more weakly bromelain and cathepsin B while it is completely ineffective against cathepsin H. The sequence is that of Clitocypin-5 (clt5) from Clitocybe nebularis (Clouded agaric).